A 377-amino-acid chain; its full sequence is Cell division protein FtsZ (377 aa).

Acidic residues predominate over residues 1–16 (MDSIVDDAIDEAEDMG). Residues 1 to 33 (MDSIVDDAIDEAEDMGDGSAEVGGPTDINRSGT) are disordered. Residues 57–61 (GAGGN), 144–146 (GTG), E175, R179, and D222 contribute to the GTP site.

Belongs to the FtsZ family. Homodimer. Polymerizes to form a dynamic ring structure in a strictly GTP-dependent manner. Interacts directly with several other division proteins.

It localises to the cytoplasm. Its function is as follows. Essential cell division protein that forms a contractile ring structure (Z ring) at the future cell division site. The regulation of the ring assembly controls the timing and the location of cell division. One of the functions of the FtsZ ring is to recruit other cell division proteins to the septum to produce a new cell wall between the dividing cells. Binds GTP and shows GTPase activity. The sequence is that of Cell division protein FtsZ from Haloferax mediterranei (strain ATCC 33500 / DSM 1411 / JCM 8866 / NBRC 14739 / NCIMB 2177 / R-4) (Halobacterium mediterranei).